Here is a 546-residue protein sequence, read N- to C-terminus: MNSTSRRSANYKPTIWNNEYLQSLNSIYGEKRFLEQAEKLKDEVRMLLEKTSDPLDHIELVDVLQRLAISYHFTEYIDRNLKNIYDILIDGRRWNHADNLHATTLSFRLLRQHGYQVSPEVFRNFMDETGNFKKNLCDDIKGLLSLYEASYLLTEGETIMDSAQAFATHHLKQKLEENMNKNLGDEIAHALELPLHWRVPKLDVRWSIDAYERRQDMNPLLLELAKLDFNIAQSMYQDELKELSRWYSKTHLPEKLAFARDRLVESYLWGLGLASEPHHKYCRMMVAQSTTLISIIDDIYDVYGTLDELQLFTHAVDRWDIKYLEQLPEYMQICFLALFNTVNERSYDFLLDKGFNVIPHSSYRWAELCKTYLIEANWYHSGYKPSLNEYLNQGLISVAGPHALSHTYLCMTDSLKEKHILDLRTNPPVIKWVSILVRLADDLGTSTDELKRGDNPKSIQCHMHDTGCNEEETRAYIKNLIGSTWKKINKDVLMNFEYSMDFRTAAMNGARVSQFMYQYDDDGHGVPEGKSKERVCSLIVEPIPLP.

The Mg(2+) site is built by Asp297, Asp301, Asp441, Thr445, and Glu449. Positions 297–301 (DDIYD) match the DDXXD motif motif.

The protein belongs to the terpene synthase family. Mg(2+) is required as a cofactor.

The enzyme catalyses (2E,6E)-farnesyl diphosphate + H2O = (+)-epi-alpha-bisabolol + diphosphate. The protein operates within secondary metabolite biosynthesis; terpenoid biosynthesis. In terms of biological role, sesquiterpene synthase involved in the biosynthesis of (+)-epi-alpha-bisabolol, a precursor of the natural sweetner hernandulcin. The protein is (+)-epi-alpha-bisabolol synthase of Phyla dulcis (Aztec sweet herb).